A 103-amino-acid chain; its full sequence is Large ribosomal subunit protein bL21 (103 aa).

Belongs to the bacterial ribosomal protein bL21 family. In terms of assembly, part of the 50S ribosomal subunit. Contacts protein L20.

Functionally, this protein binds to 23S rRNA in the presence of protein L20. This is Large ribosomal subunit protein bL21 from Salmonella agona (strain SL483).